The sequence spans 2813 residues: von Willebrand factor (2813 aa).

The N-terminal stretch at 1–22 (MSPTRLVRVLLALALILPGKLC) is a signal peptide. Residues 23 to 763 (TKGTVGRSSM…SSPRSHRSKR (741 aa)) constitute a propeptide that is removed on maturation. One can recognise a VWFD 1 domain in the interval 33–201 (ARCSLFGGDF…ALSSGEQRCK (169 aa)). Cystine bridges form between Cys-35–Cys-162 and Cys-57–Cys-200. N-linked (GlcNAc...) asparagine glycosylation is found at Asn-99, Asn-156, and Asn-211. The TIL 1 domain occupies 295 to 348 (CPAGMEYKECVSPCTRTCQSLHVKEVCQEQCVDGCSCPEGQLLDEGHCVGSAEC). The VWFD 2 domain maps to 386–560 (GECLVTGQSH…NAWKLLGACE (175 aa)). Cystine bridges form between Cys-388–Cys-524, Cys-410–Cys-559, and Cys-432–Cys-440. The Cell attachment site motif lies at 531–533 (RGD). TIL domains lie at 652 to 707 (CPQG…KAQC) and 776 to 827 (CPAD…LERC). N-linked (GlcNAc...) asparagine glycosylation occurs at Asn-666. Residues 698-700 (RGD) carry the Cell attachment site motif. The amino-terminal stretch occupies residues 764–787 (SLSCRPPMVKLVCPADNPRAEGLE). 3 disulfides stabilise this stretch: Cys-767/Cys-808, Cys-776/Cys-804, and Cys-810/Cys-821. The interval 788–833 (CAKTCQNYDLQCMSTGCVSGCLCPQGMVRHENRCVALERCPCFHQG) is E1. The CX stretch occupies residues 826 to 853 (RCPCFHQGQEYAPGETVKIDCNTCVCRD). N-linked (GlcNAc...) asparagine glycosylation occurs at Asn-857. In terms of domain architecture, VWFD 3 spans 865–1032 (ATCSAIGMAH…NSWKVNPQCA (168 aa)). Disulfide bonds link Cys-867-Cys-996, Cys-889-Cys-1031, Cys-898-Cys-993, Cys-914-Cys-921, Cys-1060-Cys-1084, Cys-1071-Cys-1111, Cys-1089-Cys-1091, Cys-1126-Cys-1130, Cys-1149-Cys-1169, Cys-1153-Cys-1165, and Cys-1196-Cys-1199. Residues 1146–1196 (YNSCAPACPITCQHPEPLACPVQCVEGCHAHCPPGKILDELLQTCIDPEDC) form the TIL 4 domain. N-linked (GlcNAc...) asparagine glycosylation is present at Asn-1231. Disulfide bonds link Cys-1234–Cys-1237 and Cys-1272–Cys-1458. VWFA domains lie at 1277 to 1453 (DLVF…RDEI) and 1498 to 1665 (DVVF…PDLV). 2 N-linked (GlcNAc...) asparagine glycosylation sites follow: Asn-1515 and Asn-1574. Cystine bridges form between Cys-1669–Cys-1670, Cys-1686–Cys-1872, Cys-1879–Cys-1904, Cys-1899–Cys-1940, Cys-1927–Cys-2088, Cys-1950–Cys-2085, Cys-1972–Cys-2123, and Cys-1993–Cys-2001. The region spanning 1691–1871 (DVVLLLDGSS…TLGNSFFHKL (181 aa)) is the VWFA 3 domain. In terms of domain architecture, VWFD 4 spans 1948 to 2124 (CVCMGSSTRH…TVQQLGKTCQ (177 aa)). Positions 2216 to 2261 (CPRLCEGNTSSCGDQPSEGCFCPPNQVMLEGSCVPEEACTQCISED) are E2. Asn-2223, Asn-2290, Asn-2357, and Asn-2400 each carry an N-linked (GlcNAc...) asparagine glycan. The VWFC 1 domain maps to 2255–2328 (TQCISEDGVR…CCPEYECVCD (74 aa)). Residues 2429–2495 (KVCVHRGTIY…HEGECCGRCL (67 aa)) enclose the VWFC 2 domain. Residues 2507 to 2509 (RGD) carry the Cell attachment site motif. 2 N-linked (GlcNAc...) asparagine glycosylation sites follow: Asn-2546 and Asn-2585. One can recognise a VWFC 3 domain in the interval 2580 to 2645 (EACLLNGTII…NQGECCGRCL (66 aa)). 4 disulfide bridges follow: Cys-2724–Cys-2774, Cys-2739–Cys-2788, Cys-2750–Cys-2804, and Cys-2754–Cys-2806. The 89-residue stretch at 2724–2812 (CKDIIAKLQR…QCRCSPRKCS (89 aa)) folds into the CTCK domain. A glycan (N-linked (GlcNAc...) asparagine) is linked at Asn-2790.

Multimeric. Interacts with F8. Post-translationally, all cysteine residues are involved in intrachain or interchain disulfide bonds. In terms of processing, N- and O-glycosylated. Plasma.

It localises to the secreted. The protein resides in the extracellular space. It is found in the extracellular matrix. Its function is as follows. Important in the maintenance of hemostasis, it promotes adhesion of platelets to the sites of vascular injury by forming a molecular bridge between sub-endothelial collagen matrix and platelet-surface receptor complex, glycoprotein Ibalpha/IX/V. Also acts as a chaperone for coagulation factor VIII, delivering it to the site of injury, stabilizing its heterodimeric structure and protecting it from premature clearance from plasma. This is von Willebrand factor (VWF) from Canis lupus familiaris (Dog).